The following is a 2207-amino-acid chain: DNA polymerase epsilon catalytic subunit A (2207 aa).

Disordered regions lie at residues 1–20 (MPSR…AASF), 1201–1233 (SMEK…PFAS), and 1934–1961 (RPES…ENEE). The Zn(2+) site is built by cysteine 2075, cysteine 2078, cysteine 2113, and cysteine 2116. A CysA-type zinc finger spans residues 2075–2116 (CSACCLIRDLDLCRDEDVLPERGSGSGPDSATSSRPWCCPFC). [4Fe-4S] cluster contacts are provided by cysteine 2147, cysteine 2150, cysteine 2162, and cysteine 2164. The CysB motif motif lies at 2147 to 2164 (CSKCGTLKISEFMEHCSC).

This sequence belongs to the DNA polymerase type-B family. In terms of assembly, heterotetramer. Consists of 4 subunits: pol2, dpb2, dpb3 and dpb4. It depends on [4Fe-4S] cluster as a cofactor.

It is found in the nucleus. It carries out the reaction DNA(n) + a 2'-deoxyribonucleoside 5'-triphosphate = DNA(n+1) + diphosphate. Functionally, DNA polymerase II participates in chromosomal DNA replication. In Emericella nidulans (strain FGSC A4 / ATCC 38163 / CBS 112.46 / NRRL 194 / M139) (Aspergillus nidulans), this protein is DNA polymerase epsilon catalytic subunit A (pol2).